The primary structure comprises 779 residues: Membrane metallo-endopeptidase-like 1 (779 aa).

At 1–27 (MGKSEGPVGMVESAGRAGQKRPGFLEG) the chain is on the cytoplasmic side. Residues 28 to 48 (GLLLLLLLVTAALVALGVLYA) traverse the membrane as a helical; Signal-anchor for type II membrane protein segment. The Lumenal segment spans residues 49 to 779 (DRRGKQLPRL…MHPKERCRVW (731 aa)). Positions 88-779 (VCTTPGCVIA…MHPKERCRVW (692 aa)) constitute a Peptidase M13 domain. Disulfide bonds link Cys89–Cys94, Cys112–Cys764, Cys120–Cys724, Cys175–Cys439, and Cys650–Cys776. Residue Arg135 coordinates a peptide. N-linked (GlcNAc...) asparagine glycosylation is found at Asn177, Asn207, Asn350, and Asn530. Positions 515 to 560 (LEEMNRRLDEEYSNLNFSEDLYFENSLQNLKVGAQRSLRKLREKVD) form a coiled coil. A Zn(2+)-binding site is contributed by His613. The active site involves Glu614. His617 contacts Zn(2+). The N-linked (GlcNAc...) asparagine glycan is linked to Asn657. Glu676 contacts Zn(2+). Asp680 serves as the catalytic Proton donor.

The protein belongs to the peptidase M13 family. Zn(2+) is required as a cofactor. Post-translationally, N-glycosylated. Predominantly expressed in testis. Weakly expressed in brain, kidney and heart.

The protein resides in the membrane. The protein localises to the secreted. It catalyses the reaction Preferential cleavage of polypeptides between hydrophobic residues, particularly with Phe or Tyr at P1'.. Inhibited by thiorphan and phosphoramidon. Metalloprotease involved in sperm function, possibly by modulating the processes of fertilization and early embryonic development. Degrades a broad variety of small peptides with a preference for peptides shorter than 3 kDa containing neutral bulky aliphatic or aromatic amino acid residues. Shares the same substrate specificity with MME and cleaves peptides at the same amide bond. This Homo sapiens (Human) protein is Membrane metallo-endopeptidase-like 1 (MMEL1).